Consider the following 327-residue polypeptide: Chain length determinant protein (327 aa).

Residues 1 to 31 lie on the Cytoplasmic side of the membrane; it reads MTVDSNTSSGRGNDPEQIDLIELLLQLWRGK. A helical transmembrane segment spans residues 32–52; sequence MTIIVAVIIAILLAVGYLMIA. The Periplasmic portion of the chain corresponds to 53 to 294; that stretch reads KEKWTSTAII…LPVRRDSPKT (242 aa). A helical membrane pass occupies residues 295–315; the sequence is AITLVLAVLLGGMIGAGIVLG. The Cytoplasmic portion of the chain corresponds to 316–327; the sequence is RNALRSYKPKAL.

It belongs to the WzzB/Cld/Rol family.

The protein localises to the cell inner membrane. It functions in the pathway bacterial outer membrane biogenesis; lipopolysaccharide biosynthesis. In terms of biological role, confers a modal distribution of chain length on the O-antigen component of lipopolysaccharide (LPS). Gives rise to a reduced number of short chain molecules and increases in numbers of longer molecules, with a modal value of 20. This chain is Chain length determinant protein (wzzB), found in Salmonella typhimurium (strain LT2 / SGSC1412 / ATCC 700720).